Consider the following 622-residue polypeptide: Protein translocase subunit SecD (622 aa).

A run of 6 helical transmembrane segments spans residues 6-26 (FKIGVTLALLLLCGYYLYPTV), 460-480 (AGLRSVLTGLLLVALFMIFYY), 485-505 (MIADLALVLNIIFILGILAAF), 512-532 (PGIAGIVLTIGMAVDANVLIF), 559-579 (AIFDANITTFFTAAILYSFGV), and 584-604 (GFAVTLMAGIAASLFSAIVIT).

It belongs to the SecD/SecF family. SecD subfamily. As to quaternary structure, forms a complex with SecF. Part of the essential Sec protein translocation apparatus which comprises SecA, SecYEG and auxiliary proteins SecDF. Other proteins may also be involved.

It localises to the cell inner membrane. Functionally, part of the Sec protein translocase complex. Interacts with the SecYEG preprotein conducting channel. SecDF uses the proton motive force (PMF) to complete protein translocation after the ATP-dependent function of SecA. The chain is Protein translocase subunit SecD from Rhodothermus marinus (strain ATCC 43812 / DSM 4252 / R-10) (Rhodothermus obamensis).